The following is a 145-amino-acid chain: Hemoglobin subunit beta (145 aa).

Positions 1 to 145 (MLTAEEKAAV…VANALAHRYH (145 aa)) constitute a Globin domain. Phosphothreonine is present on Thr-11. A Phosphoserine modification is found at Ser-43. The residue at position 58 (Lys-58) is an N6-acetyllysine. His-62 is a heme b binding site. Position 81 is an N6-acetyllysine (Lys-81). Residue His-91 participates in heme b binding. Cys-92 bears the S-nitrosocysteine mark.

Belongs to the globin family. As to quaternary structure, heterotetramer of two alpha chains and two beta chains. As to expression, red blood cells.

Involved in oxygen transport from the lung to the various peripheral tissues. In terms of biological role, functions as an endogenous inhibitor of enkephalin-degrading enzymes such as DPP3, and may thereby play a role as a regulator of pain and inflammation. This is Hemoglobin subunit beta (HBB) from Bos taurus (Bovine).